Reading from the N-terminus, the 457-residue chain is Beta-1,4-mannosyltransferase egh (457 aa).

Transmembrane regions (helical) follow at residues 8–28 (LLHC…SGGI), 35–55 (FTLV…LYLL), 57–77 (FLTL…VFYN), 346–366 (LLGI…NIIF), 378–398 (VDFV…FGVI), and 415–435 (VLGA…AVIW).

The protein belongs to the glycosyltransferase 2 family.

The protein localises to the membrane. In terms of biological role, glycosyltransferase with a proposed role in glycosphingolipid biosynthesis. Neurogenic protein implicated in epithelial development. Critical component of a differential oocyte-follicle cell adhesive system. In Drosophila melanogaster (Fruit fly), this protein is Beta-1,4-mannosyltransferase egh (egh).